The primary structure comprises 1389 residues: DNA-directed RNA polymerase subunit beta'' (1389 aa).

Zn(2+) is bound by residues Cys224, Cys295, Cys302, and Cys305.

Belongs to the RNA polymerase beta' chain family. RpoC2 subfamily. In plastids the minimal PEP RNA polymerase catalytic core is composed of four subunits: alpha, beta, beta', and beta''. When a (nuclear-encoded) sigma factor is associated with the core the holoenzyme is formed, which can initiate transcription. Zn(2+) is required as a cofactor.

The protein resides in the plastid. Its subcellular location is the chloroplast. The enzyme catalyses RNA(n) + a ribonucleoside 5'-triphosphate = RNA(n+1) + diphosphate. DNA-dependent RNA polymerase catalyzes the transcription of DNA into RNA using the four ribonucleoside triphosphates as substrates. In Atropa belladonna (Belladonna), this protein is DNA-directed RNA polymerase subunit beta''.